A 2146-amino-acid polypeptide reads, in one-letter code: YLP motif-containing protein 1 (2146 aa).

Disordered stretches follow at residues 1–381 (MYPN…ARLK) and 562–880 (PPVM…FKMQ). Residues 14 to 26 (YPPPPVPPPPPVA) show a composition bias toward pro residues. Composition is skewed to low complexity over residues 27 to 48 (LPEA…PSSS) and 58 to 79 (LAQL…LQPH). Pro residues-rich tracts occupy residues 80-92 (HLPP…PPVM), 101-113 (QPPP…PPGP), 147-157 (PESPPVPPGSY), 165-175 (MPPPQPPPSYY), and 183-194 (YLPPAQPSPSQS). A compositionally biased stretch (low complexity) spans 195–237 (PPSQSYLAPTPSYSSSSSSSQSYLSHSQSYLPSSQASPSRPSQ). Composition is skewed to polar residues over residues 256 to 279 (NKTT…QQQA) and 286 to 308 (STMT…LQQR). Basic residues predominate over residues 309–319 (TKVHLPGHKKG). A compositionally biased stretch (basic and acidic residues) spans 325 to 334 (DTPEPVKEEV). Pro residues-rich tracts occupy residues 349–368 (EEPP…PPEE), 562–579 (PPVM…PGMP), and 586–642 (GPPP…PQGI). The span at 643 to 663 (PPQLTAAPVPPASSSQSSQVP) shows a compositional bias: low complexity. Polar residues predominate over residues 692–702 (AGPSEQVNSKA). At lysine 735 the chain carries N6-methyllysine. Serine 756 bears the Phosphoserine mark. Residues 758–806 (RGPRFDGPRRFEDLGSRCEGPRPKGPRFEGNRPDGPRPRYEGHPAEGTK) are compositionally biased toward basic and acidic residues. Arginine 814 is modified (omega-N-methylarginine). Composition is skewed to polar residues over residues 820 to 835 (FYIT…QSGP) and 868 to 880 (DTSS…FKMQ). Serine 829 carries the post-translational modification Phosphoserine. Residue arginine 831 is modified to Omega-N-methylarginine. Residue lysine 891 forms a Glycyl lysine isopeptide (Lys-Gly) (interchain with G-Cter in SUMO2) linkage. 2 disordered regions span residues 895–1211 (AAQS…GRNA) and 1243–1351 (NRED…DDRW). 2 stretches are compositionally biased toward polar residues: residues 896–909 (AQSN…QQEP) and 923–933 (NWDQNVQSMET). Residue lysine 983 forms a Glycyl lysine isopeptide (Lys-Gly) (interchain with G-Cter in SUMO1); alternate linkage. Lysine 983 is covalently cross-linked (Glycyl lysine isopeptide (Lys-Gly) (interchain with G-Cter in SUMO2); alternate). Composition is skewed to basic and acidic residues over residues 994 to 1012 (NNQD…RLEG), 1027 to 1036 (RMEDTRDKGL), and 1053 to 1093 (KQED…REKV). A Glycyl lysine isopeptide (Lys-Gly) (interchain with G-Cter in SUMO1); alternate cross-link involves residue lysine 1053. Residue lysine 1053 forms a Glycyl lysine isopeptide (Lys-Gly) (interchain with G-Cter in SUMO2); alternate linkage. Serine 1100 and serine 1119 each carry phosphoserine. Composition is skewed to basic and acidic residues over residues 1129–1211 (GSRE…GRNA) and 1243–1264 (NRED…RGPW). The segment covering 1266–1276 (DDWERDQDMDE) has biased composition (acidic residues). The segment covering 1277–1328 (DYNREMERDMDRDVDRISRPMDMYDRSLDNEWDRDYGRPLDEQESQFRERDI) has biased composition (basic and acidic residues). Residues 1330 to 1342 (SLPPLPPLPPLPP) are compositionally biased toward pro residues. Serine 1402 bears the Phosphoserine mark. 3 disordered regions span residues 1407–1438 (PSDV…SLDS), 1469–1573 (QKEQ…EQER), and 1602–1828 (IPSA…PPGR). Residues 1417-1430 (AEHMPSSHHSSEMM) are compositionally biased toward low complexity. A compositionally biased stretch (basic and acidic residues) spans 1469 to 1480 (QKEQLQKMKDFG). A compositionally biased stretch (pro residues) spans 1505–1520 (MYPPPGSYRPPPPMGK). Low complexity predominate over residues 1521-1539 (PPGSIVRPSAPPARSSVPV). Composition is skewed to pro residues over residues 1540 to 1562 (TRPP…PPVI) and 1606 to 1636 (PVLP…PPPV). Residue lysine 1652 forms a Glycyl lysine isopeptide (Lys-Gly) (interchain with G-Cter in SUMO2) linkage. 4 stretches are compositionally biased toward basic and acidic residues: residues 1662–1696 (ITLR…EPYF), 1704–1774 (ADHR…DRPV), 1783–1793 (GERRTYPEERM), and 1809–1828 (RVEK…PPGR). Residue lysine 1710 forms a Glycyl lysine isopeptide (Lys-Gly) (interchain with G-Cter in SUMO2) linkage. An involved in interaction with PPP1CA region spans residues 2096–2103 (KKRVRWAD).

As to quaternary structure, interacts with PPP1CA and NCOA5. Forms a complex with ILF2, ILF3, KHDRBS1, RBMX, NCOA5 and PPP1CA. As to expression, expressed in neuronal, neuroblastoma and embryonic kidney cell lines (at protein level).

It is found in the nucleus. It localises to the nucleus speckle. Its function is as follows. Plays a role in the reduction of telomerase activity during differentiation of embryonic stem cells by binding to the core promoter of TERT and controlling its down-regulation. This chain is YLP motif-containing protein 1 (YLPM1), found in Homo sapiens (Human).